We begin with the raw amino-acid sequence, 443 residues long: MITSSFSEKCTSVINGAPSWAVFFLFDLLDYFLCIVFRFLDEVMEEKSESCHCNNPREKTHFAEYEFLSETLYRRRNVFRQAGFLRFANKLPEITKKIGIVTFLRKFLFPHTMNKVSHEVANRWSDCGCKTCVSWINTDKLNVIVKQPSISDLSISNKPVENVIFVHGFLASSSFWTNTVFKYLPETTEGTNYRFFAIDLLGFGDSPKPRASQYSLKEHVEMIEKSVILPNNLTSFHVVAHSMGCIIGIALAAKFSDSVKSVALVAPPYFADSKGGASCAALDVVAKKKLWPPASFFTAMMCWYEHIGRGVCLVFCRHHRTWERIIKIVTWRRKLPTAIMDFTKHTHQSGWHSMHNVICGGAKFTDKHLETLIKSGVKINVMQGDKDVVVPIDCLSNMKGKFPAVEVEVIAGTDHSTVIMSRREVFAANLVSLWATSEKKQKV.

The signal sequence occupies residues 1-52 (MITSSFSEKCTSVINGAPSWAVFFLFDLLDYFLCIVFRFLDEVMEEKSESCH). Cys-53 is lipidated: N-palmitoyl cysteine. The 106-residue stretch at 163–268 (VIFVHGFLAS…VKSVALVAPP (106 aa)) folds into the AB hydrolase-1 domain. His-167 is an active-site residue. The active-site Nucleophile is the Ser-242. Active-site charge relay system residues include Asp-387 and His-415.

It is found in the cell membrane. It localises to the secreted. The protein resides in the cell wall. Functionally, involved in cuticle development and morphogenesis. This Arabidopsis thaliana (Mouse-ear cress) protein is Probable lysophospholipase BODYGUARD 5.